A 286-amino-acid chain; its full sequence is 4-hydroxybenzoate octaprenyltransferase (286 aa).

Transmembrane regions (helical) follow at residues 19–39, 42–62, 92–112, 115–135, 137–157, 161–181, 206–226, 233–253, and 264–284; these read AGWL…SHGF, WHLL…GCCV, ALVL…TTNA, IAWS…KRYV, MPQA…FAAV, VPLL…AYDT, FDVA…ALAL, AIYW…GWLI, and AFRL…LSYL.

It belongs to the UbiA prenyltransferase family. It depends on Mg(2+) as a cofactor.

Its subcellular location is the cell inner membrane. It carries out the reaction all-trans-octaprenyl diphosphate + 4-hydroxybenzoate = 4-hydroxy-3-(all-trans-octaprenyl)benzoate + diphosphate. It participates in cofactor biosynthesis; ubiquinone biosynthesis. Functionally, catalyzes the prenylation of para-hydroxybenzoate (PHB) with an all-trans polyprenyl group. Mediates the second step in the final reaction sequence of ubiquinone-8 (UQ-8) biosynthesis, which is the condensation of the polyisoprenoid side chain with PHB, generating the first membrane-bound Q intermediate 3-octaprenyl-4-hydroxybenzoate. In Polaromonas sp. (strain JS666 / ATCC BAA-500), this protein is 4-hydroxybenzoate octaprenyltransferase.